A 264-amino-acid polypeptide reads, in one-letter code: Phosphatidylglycerol--prolipoprotein diacylglyceryl transferase (264 aa).

3 helical membrane passes run 17–37, 59–79, and 95–115; these read LAIH…LWLA, LLFY…VLFY, and WKGG…MALF. Arginine 142 lines the a 1,2-diacyl-sn-glycero-3-phospho-(1'-sn-glycerol) pocket. 2 helical membrane passes run 205–225 and 241–261; these read GQVS…AEYF and MGQW…VWAG.

This sequence belongs to the Lgt family.

It localises to the cell inner membrane. It catalyses the reaction L-cysteinyl-[prolipoprotein] + a 1,2-diacyl-sn-glycero-3-phospho-(1'-sn-glycerol) = an S-1,2-diacyl-sn-glyceryl-L-cysteinyl-[prolipoprotein] + sn-glycerol 1-phosphate + H(+). Its pathway is protein modification; lipoprotein biosynthesis (diacylglyceryl transfer). Its function is as follows. Catalyzes the transfer of the diacylglyceryl group from phosphatidylglycerol to the sulfhydryl group of the N-terminal cysteine of a prolipoprotein, the first step in the formation of mature lipoproteins. This is Phosphatidylglycerol--prolipoprotein diacylglyceryl transferase from Methylibium petroleiphilum (strain ATCC BAA-1232 / LMG 22953 / PM1).